Reading from the N-terminus, the 171-residue chain is MRALFPGRFQPFHKGHLAVVKWSLERVDELVIVVGSAQESHTLQNPMTAGERVLAIRRALEDEGIDLRKVYIIPVPDILMNSAWVAHVRTYVPPFEAVVTRNPLVKVLFEEAGYEVLEPPPFGREKYVATNIRALMALGDPKWEEMVPRAVAEIIKELGIIRRMRELSKRD.

The protein belongs to the archaeal NMN adenylyltransferase family.

Its subcellular location is the cytoplasm. It carries out the reaction beta-nicotinamide D-ribonucleotide + ATP + H(+) = diphosphate + NAD(+). It functions in the pathway cofactor biosynthesis; NAD(+) biosynthesis; NAD(+) from nicotinamide D-ribonucleotide: step 1/1. The sequence is that of Nicotinamide-nucleotide adenylyltransferase from Ignicoccus hospitalis (strain KIN4/I / DSM 18386 / JCM 14125).